The sequence spans 411 residues: Aspartate kinase (411 aa).

Positions 265–348 constitute an ACT domain; that stretch reads LTIRGVPDTP…KIAKVSIVGV (84 aa).

This sequence belongs to the aspartokinase family.

It localises to the cytoplasm. The catalysed reaction is L-aspartate + ATP = 4-phospho-L-aspartate + ADP. It functions in the pathway amino-acid biosynthesis; L-lysine biosynthesis via DAP pathway; (S)-tetrahydrodipicolinate from L-aspartate: step 1/4. It participates in amino-acid biosynthesis; L-methionine biosynthesis via de novo pathway; L-homoserine from L-aspartate: step 1/3. Its pathway is amino-acid biosynthesis; L-threonine biosynthesis; L-threonine from L-aspartate: step 1/5. Allosterically feedback inhibited by L-lysine and L-threonine individually and also subject to a concerted feedback inhibition by these amino acids. Its function is as follows. Involved in the biosynthesis of L-aspartate-beta-semialdehyde which is a central intermediate in the biosynthesis of different amino acids (L-lysine, L-methionine, L-threonine). Catalyzes the phosphorylation of the beta-carboxyl group of L-aspartate to yield 4-phospho-L-aspartate. This Pseudomonas putida (strain ATCC 47054 / DSM 6125 / CFBP 8728 / NCIMB 11950 / KT2440) protein is Aspartate kinase.